A 290-amino-acid chain; its full sequence is Pyridoxal kinase PdxY (290 aa).

Substrate is bound by residues S12 and 47–48 (TQ). ATP-binding positions include D114, E151, K184, and 211–214 (RPLL). Residue D225 coordinates substrate.

Belongs to the pyridoxine kinase family. PdxY subfamily. Homodimer. The cofactor is Mg(2+).

It carries out the reaction pyridoxal + ATP = pyridoxal 5'-phosphate + ADP + H(+). The protein operates within cofactor metabolism; pyridoxal 5'-phosphate salvage; pyridoxal 5'-phosphate from pyridoxal: step 1/1. In terms of biological role, pyridoxal kinase involved in the salvage pathway of pyridoxal 5'-phosphate (PLP). Catalyzes the phosphorylation of pyridoxal to PLP. This is Pyridoxal kinase PdxY from Pseudomonas putida (strain ATCC 47054 / DSM 6125 / CFBP 8728 / NCIMB 11950 / KT2440).